A 176-amino-acid polypeptide reads, in one-letter code: Ribosome rescue factor SmrB (176 aa).

The 76-residue stretch at 97 to 172 (LDMHGMTQQE…GNGALLVLID (76 aa)) folds into the Smr domain.

The protein belongs to the SmrB family. In terms of assembly, associates with collided ribosomes, but not with correctly translating polysomes.

Acts as a ribosome collision sensor. Detects stalled/collided disomes (pairs of ribosomes where the leading ribosome is stalled and a second ribosome has collided with it) and endonucleolytically cleaves mRNA at the 5' boundary of the stalled ribosome. Stalled/collided disomes form a new interface (primarily via the 30S subunits) that binds SmrB. Cleaved mRNA becomes available for tmRNA ligation, leading to ribosomal subunit dissociation and rescue of stalled ribosomes. The chain is Ribosome rescue factor SmrB from Photobacterium profundum (strain SS9).